The following is a 156-amino-acid chain: MVRRFKRGTKYRRGSRTHGWGRVGQHRKSGGSGGKGMVGFHKHKWSLVMKYGESGTGWPFYGKHGFKQPPPISIEWRPINVGTLAELVKELKAEGKVREEGGKYVINLLELGFNKLLGGGTIDLPVIVYTPIASRTAVEKIEKAGGEVRIIHVIHR.

The span at 1–16 (MVRRFKRGTKYRRGSR) shows a compositional bias: basic residues. The tract at residues 1–37 (MVRRFKRGTKYRRGSRTHGWGRVGQHRKSGGSGGKGM) is disordered.

Belongs to the universal ribosomal protein uL15 family. As to quaternary structure, part of the 50S ribosomal subunit.

In terms of biological role, binds to the 23S rRNA. This Pyrobaculum aerophilum (strain ATCC 51768 / DSM 7523 / JCM 9630 / CIP 104966 / NBRC 100827 / IM2) protein is Large ribosomal subunit protein uL15.